A 91-amino-acid polypeptide reads, in one-letter code: Small integral membrane protein 13 (91 aa).

The chain crosses the membrane as a helical span at residues 10–30 (LVFVATLLIVLLLMVCGWYFV). The segment at 47–91 (DTGSQEGDHEPSGSETEEDTSSSPHRIRSARQRRAPADEGHRPLT) is disordered. Residues S58 and S60 each carry the phosphoserine modification. The residue at position 62 (T62) is a Phosphothreonine. S69 carries the phosphoserine modification. The span at 71–80 (HRIRSARQRR) shows a compositional bias: basic residues. Residues 81-91 (APADEGHRPLT) show a composition bias toward basic and acidic residues.

The protein belongs to the SMIM13 family.

It localises to the membrane. The polypeptide is Small integral membrane protein 13 (SMIM13) (Homo sapiens (Human)).